A 276-amino-acid chain; its full sequence is Undecaprenyl-diphosphatase 2 (276 aa).

The next 8 helical transmembrane spans lie at 1 to 21, 44 to 64, 87 to 107, 114 to 134, 150 to 170, 190 to 210, 222 to 242, and 251 to 271; these read MSLWFLVFLSVLQGVTELFPV, QLLPFLVALHLGTAFALLWYF, GHLMWALIIGTIPAGLVGLLL, VFHDLRIVAVALIVNGILLWL, LTFKQAFFVGLAQVGALIPGF, AAEFSFLLGTPIIFAAGLLEL, DALLGGVLTAIAAYLSVRFLM, and LASFGLYCALAGLFCLGWFMF.

This sequence belongs to the UppP family.

It localises to the cell inner membrane. It carries out the reaction di-trans,octa-cis-undecaprenyl diphosphate + H2O = di-trans,octa-cis-undecaprenyl phosphate + phosphate + H(+). Its function is as follows. Catalyzes the dephosphorylation of undecaprenyl diphosphate (UPP). Confers resistance to bacitracin. The sequence is that of Undecaprenyl-diphosphatase 2 from Burkholderia thailandensis (strain ATCC 700388 / DSM 13276 / CCUG 48851 / CIP 106301 / E264).